We begin with the raw amino-acid sequence, 200 residues long: ATP synthase subunit b 2 (200 aa).

Positions 1–16 (MAEQNILTTPSPNADT) are enriched in polar residues. The segment at 1-38 (MAEQNILTTPSPNADTTIVPPGSPHTHTEQPSGGHGGA) is disordered. Residues 46-66 (TFLAQLIWLALAFGLLYYLMS) form a helical membrane-spanning segment.

Belongs to the ATPase B chain family. F-type ATPases have 2 components, F(1) - the catalytic core - and F(0) - the membrane proton channel. F(1) has five subunits: alpha(3), beta(3), gamma(1), delta(1), epsilon(1). F(0) has three main subunits: a(1), b(2) and c(10-14). The alpha and beta chains form an alternating ring which encloses part of the gamma chain. F(1) is attached to F(0) by a central stalk formed by the gamma and epsilon chains, while a peripheral stalk is formed by the delta and b chains.

It localises to the cell inner membrane. Functionally, f(1)F(0) ATP synthase produces ATP from ADP in the presence of a proton or sodium gradient. F-type ATPases consist of two structural domains, F(1) containing the extramembraneous catalytic core and F(0) containing the membrane proton channel, linked together by a central stalk and a peripheral stalk. During catalysis, ATP synthesis in the catalytic domain of F(1) is coupled via a rotary mechanism of the central stalk subunits to proton translocation. Component of the F(0) channel, it forms part of the peripheral stalk, linking F(1) to F(0). The b'-subunit is a diverged and duplicated form of b found in plants and photosynthetic bacteria. The chain is ATP synthase subunit b 2 (atpF2) from Methylorubrum populi (strain ATCC BAA-705 / NCIMB 13946 / BJ001) (Methylobacterium populi).